Here is a 259-residue protein sequence, read N- to C-terminus: Malonyl-[acyl-carrier protein] O-methyltransferase 2 (259 aa).

This sequence belongs to the methyltransferase superfamily.

It catalyses the reaction malonyl-[ACP] + S-adenosyl-L-methionine = malonyl-[ACP] methyl ester + S-adenosyl-L-homocysteine. The protein operates within cofactor biosynthesis; biotin biosynthesis. In terms of biological role, converts the free carboxyl group of a malonyl-thioester to its methyl ester by transfer of a methyl group from S-adenosyl-L-methionine (SAM). It allows to synthesize pimeloyl-ACP via the fatty acid synthetic pathway. In Ilyobacter polytropus (strain ATCC 51220 / DSM 2926 / LMG 16218 / CuHBu1), this protein is Malonyl-[acyl-carrier protein] O-methyltransferase 2.